The sequence spans 297 residues: Transmembrane protein 178A (297 aa).

Residues 1–25 (MEPRALVTALSLGLSLCSLGLLVTA) form the signal peptide. Topologically, residues 26 to 179 (IFTDHWYETD…LLHLRRITAG (154 aa)) are extracellular. Residues 41–57 (ESCERSRAGADPPDQKN) are compositionally biased toward basic and acidic residues. Positions 41–84 (ESCERSRAGADPPDQKNRLMPLSHLPLRDSPPLGRRLLPGGPGR) are disordered. Positions 68–79 (RDSPPLGRRLLP) are enriched in low complexity. Residue N158 is glycosylated (N-linked (GlcNAc...) asparagine). A helical membrane pass occupies residues 180–200 (FLGMAVAVLLCGCIVATVSFF). Over 201–208 (WEESLTQH) the chain is Cytoplasmic. A helical membrane pass occupies residues 209–229 (VAGLLFLMTGIFCTISLCTYA). Topologically, residues 230–257 (ASISYDLNRLPKLIYSLPADVEHGYSWS) are extracellular. Residues 258–278 (IFCAWCSLGFIVAAGGLCIAY) traverse the membrane as a helical segment. Residues 279-297 (PFISRTKIAQLKSGRDSTV) are Cytoplasmic-facing.

This sequence belongs to the TMEM178 family. Interacts with STIM1.

The protein localises to the endoplasmic reticulum membrane. Functionally, acts as a negative regulator of osteoclast differentiation in basal and inflammatory conditions by regulating TNFSF11-induced Ca (2+) fluxes, thereby controlling the induction of NFATC1. The sequence is that of Transmembrane protein 178A (TMEM178A) from Homo sapiens (Human).